Consider the following 630-residue polypeptide: MAEETQHNKLAAAKKKLKEYWQKNSPRVPAGANRNRKTNGSIPEKATSGGCQPPRDSATGFHREGPTSSATLKDLESPCQERAVVLDSRSVEISQLKNTIKSLKQQKKQVEHQLEEEKKANNKKQKAKRVLEVQIQTLNIQKEELNTDLYHMKRSLRYFEEKSKDLAVRLQHSLQRKGELESVLSNVMATQKKKANQLSSRSKARTEWKLEQSMREEALLKVQLTQLKESFQQVQLERDEYSEHLKGERARWQQRMRKMSQEICTLKKEKQQDMRRVEKLERSLSKLKNQMAEPLPPEPPAVPSEVELQHLRKELERVAGELQAQVKKNQRISLLNQRQEERIQEQEERLRKQEERIQEQHKSLQQLAKPQSVFEEPNNENKNALQLEQQVKELQEKLGEEHLEAASQQNQQLTAQLSLMALPGEGHGEHLDSEGEEAPQPMPSVPEDLESREAMSSFMDHLKEKADLSELVKKELCFIHHWRDRRHQKTHHLLSEPGGCAKDAALGGGHHQAGAQGGDEGEAAGAAADGIAAYSNYNNGHRKFLAAAHNPADEPGPGAPAPQELGAADKHGDLREVSLTSSAQGEAREDPLLDKPTAQPIVQDHKEHPGLGSNCCVPLFCWAWLPRRRR.

A disordered region spans residues M1–E76. Coiled-coil stretches lie at residues L86–D148 and L224–Q411. Basic and acidic residues predominate over residues K352–K362. Disordered regions lie at residues K352 to N379 and G424 to S444.

It belongs to the GOLGA8 family.

In Homo sapiens (Human), this protein is Golgin subfamily A member 8K.